The following is a 252-amino-acid chain: 5'-nucleotidase SurE (252 aa).

A divalent metal cation is bound by residues aspartate 8, aspartate 9, serine 40, and asparagine 92.

It belongs to the SurE nucleotidase family. The cofactor is a divalent metal cation.

The protein localises to the cytoplasm. The catalysed reaction is a ribonucleoside 5'-phosphate + H2O = a ribonucleoside + phosphate. Functionally, nucleotidase that shows phosphatase activity on nucleoside 5'-monophosphates. This chain is 5'-nucleotidase SurE, found in Chelativorans sp. (strain BNC1).